We begin with the raw amino-acid sequence, 121 residues long: Phosphoribosyl-ATP pyrophosphatase (121 aa).

This sequence belongs to the PRA-PH family.

The protein localises to the cytoplasm. It catalyses the reaction 1-(5-phospho-beta-D-ribosyl)-ATP + H2O = 1-(5-phospho-beta-D-ribosyl)-5'-AMP + diphosphate + H(+). The protein operates within amino-acid biosynthesis; L-histidine biosynthesis; L-histidine from 5-phospho-alpha-D-ribose 1-diphosphate: step 2/9. The sequence is that of Phosphoribosyl-ATP pyrophosphatase from Burkholderia cenocepacia (strain ATCC BAA-245 / DSM 16553 / LMG 16656 / NCTC 13227 / J2315 / CF5610) (Burkholderia cepacia (strain J2315)).